A 186-amino-acid chain; its full sequence is MANETNAVEAAAAVAGHAAEAAEKGGMPQLDFSTFPNQIFWLLLALGAIYWLLKNIAIPRIAAILADRAGTISGDLAAAEQYKLKAKDAEAAYAKALADARAQAQKIIAETRAVIQKDLDAATAKADADIAARVAQSEVKIAEIRAGALEAVQIVATDTATAIVTALGGKADMGALNAAVGQRVKG.

Residues 39–59 form a helical membrane-spanning segment; that stretch reads IFWLLLALGAIYWLLKNIAIP.

This sequence belongs to the ATPase B chain family. F-type ATPases have 2 components, F(1) - the catalytic core - and F(0) - the membrane proton channel. F(1) has five subunits: alpha(3), beta(3), gamma(1), delta(1), epsilon(1). F(0) has four main subunits: a(1), b(1), b'(1) and c(10-14). The alpha and beta chains form an alternating ring which encloses part of the gamma chain. F(1) is attached to F(0) by a central stalk formed by the gamma and epsilon chains, while a peripheral stalk is formed by the delta, b and b' chains.

The protein resides in the cellular chromatophore membrane. F(1)F(0) ATP synthase produces ATP from ADP in the presence of a proton or sodium gradient. F-type ATPases consist of two structural domains, F(1) containing the extramembraneous catalytic core and F(0) containing the membrane proton channel, linked together by a central stalk and a peripheral stalk. During catalysis, ATP synthesis in the catalytic domain of F(1) is coupled via a rotary mechanism of the central stalk subunits to proton translocation. Functionally, component of the F(0) channel, it forms part of the peripheral stalk, linking F(1) to F(0). The b'-subunit is a diverged and duplicated form of b found in plants and photosynthetic bacteria. This chain is ATP synthase subunit b', found in Rhodobacter capsulatus (Rhodopseudomonas capsulata).